A 106-amino-acid chain; its full sequence is Cell division protein FtsB (106 aa).

Residues 1–3 (MRL) lie on the Cytoplasmic side of the membrane. Residues 4 to 21 (LTLIFVALIALLQYPLWL) form a helical membrane-spanning segment. The Periplasmic segment spans residues 22-106 (GKGSWLRVWD…SPPAALTGAQ (85 aa)). The stretch at 31 to 73 (DLNQKIVAQKAVNAELKLRNDTLDAEVRDLKQGNAAIEERARS) forms a coiled coil.

Belongs to the FtsB family. As to quaternary structure, part of a complex composed of FtsB, FtsL and FtsQ.

The protein localises to the cell inner membrane. Functionally, essential cell division protein. May link together the upstream cell division proteins, which are predominantly cytoplasmic, with the downstream cell division proteins, which are predominantly periplasmic. This is Cell division protein FtsB from Methylobacillus flagellatus (strain ATCC 51484 / DSM 6875 / VKM B-1610 / KT).